The following is a 65-amino-acid chain: UPF0434 protein HS_0657 (65 aa).

The protein belongs to the UPF0434 family.

This Histophilus somni (strain 129Pt) (Haemophilus somnus) protein is UPF0434 protein HS_0657.